A 570-amino-acid chain; its full sequence is Protein translocase subunit SecD (570 aa).

Over residues 104–117 (GANATGTPSASETG) the composition is skewed to polar residues. Positions 104–198 (GANATGTPSA…SASASGDDAT (95 aa)) are disordered. The segment covering 122 to 146 (KATDKATDKATDKATDGDKATDGDK) has biased composition (basic and acidic residues). 2 stretches are compositionally biased toward low complexity: residues 147–161 (ASGT…SATS) and 172–196 (ADPS…SGDD). 5 helical membrane passes run 370-390 (AGLI…LFYY), 395-415 (FIAV…MALL), 419-439 (IGFA…GITA), 474-494 (ILVS…VTVG), and 498-518 (GFAF…FLFT). The interval 540 to 570 (LDPKALGAKPPLRRTRRPSRPAAGPVDPKEA) is disordered.

The protein belongs to the SecD/SecF family. SecD subfamily. As to quaternary structure, forms a complex with SecF. Part of the essential Sec protein translocation apparatus which comprises SecA, SecYEG and auxiliary proteins SecDF. Other proteins may also be involved.

It is found in the cell membrane. In terms of biological role, part of the Sec protein translocase complex. Interacts with the SecYEG preprotein conducting channel. SecDF uses the proton motive force (PMF) to complete protein translocation after the ATP-dependent function of SecA. The sequence is that of Protein translocase subunit SecD from Streptomyces coelicolor (strain ATCC BAA-471 / A3(2) / M145).